The primary structure comprises 284 residues: Tropomyosin (284 aa).

Residues 1–284 (MDAIKKKMVA…DATFAELAGY (284 aa)) adopt a coiled-coil conformation. Basic and acidic residues predominate over residues 32 to 41 (TEEAKAKIED). Residues 32–60 (TEEAKAKIEDDYNSLQKKSIQTENDLDNT) form a disordered region. Positions 44-60 (NSLQKKSIQTENDLDNT) are enriched in polar residues.

Belongs to the tropomyosin family. In terms of assembly, homodimer.

In terms of biological role, tropomyosin, in association with the troponin complex, plays a central role in the calcium dependent regulation of muscle contraction. This chain is Tropomyosin, found in Mytilus edulis (Blue mussel).